A 352-amino-acid polypeptide reads, in one-letter code: tRNA-specific 2-thiouridylase MnmA (352 aa).

ATP is bound by residues G7–S14 and L33. The active-site Nucleophile is the C94. A disulfide bond links C94 and C193. G119 contacts ATP. The interaction with tRNA stretch occupies residues K143 to Q145. C193 (cysteine persulfide intermediate) is an active-site residue. Positions R298–Y299 are interaction with tRNA.

The protein belongs to the MnmA/TRMU family.

Its subcellular location is the cytoplasm. It catalyses the reaction S-sulfanyl-L-cysteinyl-[protein] + uridine(34) in tRNA + AH2 + ATP = 2-thiouridine(34) in tRNA + L-cysteinyl-[protein] + A + AMP + diphosphate + H(+). Its function is as follows. Catalyzes the 2-thiolation of uridine at the wobble position (U34) of tRNA, leading to the formation of s(2)U34. In Nostoc sp. (strain PCC 7120 / SAG 25.82 / UTEX 2576), this protein is tRNA-specific 2-thiouridylase MnmA.